The chain runs to 898 residues: Translation initiation factor IF-2 (898 aa).

Positions 51-302 (KEHGDATGSE…RKGRINKPMS (252 aa)) are disordered. Basic and acidic residues-rich tracts occupy residues 100-164 (SSVE…KRET) and 171-230 (RSDE…KETV). The segment covering 234–245 (QENTDYHVTTSR) has biased composition (polar residues). Residues 263–273 (RRSTKANKRKM) show a composition bias toward basic residues. Residues 274–286 (SSRDDNQERDSRP) are compositionally biased toward basic and acidic residues. A compositionally biased stretch (basic residues) spans 287 to 297 (RGGKAGRKGRI). Residues 397–566 (SRAPVVTIMG…LLQAEVLELK (170 aa)) form the tr-type G domain. The G1 stretch occupies residues 406–413 (GHVDHGKT). 406–413 (GHVDHGKT) serves as a coordination point for GTP. The G2 stretch occupies residues 431–435 (GITQH). The segment at 452–455 (DTPG) is G3. GTP-binding positions include 452–456 (DTPGH) and 506–509 (NKID). The interval 506-509 (NKID) is G4. The G5 stretch occupies residues 542-544 (SAK).

This sequence belongs to the TRAFAC class translation factor GTPase superfamily. Classic translation factor GTPase family. IF-2 subfamily.

The protein resides in the cytoplasm. Functionally, one of the essential components for the initiation of protein synthesis. Protects formylmethionyl-tRNA from spontaneous hydrolysis and promotes its binding to the 30S ribosomal subunits. Also involved in the hydrolysis of GTP during the formation of the 70S ribosomal complex. The protein is Translation initiation factor IF-2 of Vibrio cholerae serotype O1 (strain ATCC 39541 / Classical Ogawa 395 / O395).